Reading from the N-terminus, the 107-residue chain is Antimicrobial peptide microplusin (107 aa).

An N-terminal signal peptide occupies residues 1 to 19 (MKSLLVCLVLAVVVLVASG). Disulfide bonds link cysteine 25/cysteine 60, cysteine 38/cysteine 88, and cysteine 49/cysteine 54. Positions 86–107 (TDCDHSHGHEHSHGHEHGHGHH) are disordered. The span at 87 to 107 (DCDHSHGHEHSHGHEHGHGHH) shows a compositional bias: basic and acidic residues.

The protein localises to the secreted. Functionally, has bacteriostatic activity against Gram-positive bacteria, but not against Gram-negative bacteria. Has fungistatic activity against some but not all fungi. Binds and sequesters copper and iron ions. Copper-chelating is crucial for antimicrobial activity against M.luteus. This chain is Antimicrobial peptide microplusin, found in Ixodes scapularis (Black-legged tick).